A 97-amino-acid chain; its full sequence is Cornifin (97 aa).

The tract at residues 1-42 is disordered; it reads MSSQQQKQPCTPPPQPQQQQVKQPCQPPPQEPCVPKTKEPCH. Serine 2 bears the N-acetylserine mark. A run of 9 repeats spans residues 3-14, 18-29, 31-38, 39-46, 47-54, 55-62, 63-70, 71-78, and 79-85. The tract at residues 3–29 is 2 X 12 AA approximate repeats; that stretch reads SQQQKQPCTPPPQPQQQQVKQPCQPPP. A 7 X 8 AA approximate tandem repeats region spans residues 31 to 85; it reads EPCVPKTKEPCHPKVPEPCQPKVPEPCQPKVPEPCHPKVPEPCQPKVPEPCPSPV.

The protein belongs to the cornifin (SPRR) family. Not detected in normal lung tissue but seen in tumor tissues. Cells around the keratin pearls contain high levels.

The protein resides in the cytoplasm. Functionally, cross-linked envelope protein of keratinocytes. It is a keratinocyte protein that first appears in the cell cytosol, but ultimately becomes cross-linked to membrane proteins by transglutaminase. All that results in the formation of an insoluble envelope beneath the plasma membrane. This is Cornifin (SPRP) from Sus scrofa (Pig).